The sequence spans 57 residues: Large ribosomal subunit protein bL32 (57 aa).

It belongs to the bacterial ribosomal protein bL32 family.

The protein is Large ribosomal subunit protein bL32 of Staphylococcus haemolyticus (strain JCSC1435).